The chain runs to 232 residues: Orotidine 5'-phosphate decarboxylase (232 aa).

Residues Asp11, Lys33, 60-69, Thr120, Arg181, Gln190, Gly210, and Arg211 each bind substrate; that span reads DLKFHDIPNT. The active-site Proton donor is Lys62.

Belongs to the OMP decarboxylase family. Type 1 subfamily. As to quaternary structure, homodimer.

The catalysed reaction is orotidine 5'-phosphate + H(+) = UMP + CO2. Its pathway is pyrimidine metabolism; UMP biosynthesis via de novo pathway; UMP from orotate: step 2/2. Catalyzes the decarboxylation of orotidine 5'-monophosphate (OMP) to uridine 5'-monophosphate (UMP). In Vibrio vulnificus (strain YJ016), this protein is Orotidine 5'-phosphate decarboxylase.